A 960-amino-acid polypeptide reads, in one-letter code: Glycine dehydrogenase (decarboxylating) (960 aa).

At K709 the chain carries N6-(pyridoxal phosphate)lysine.

This sequence belongs to the GcvP family. In terms of assembly, the glycine cleavage system is composed of four proteins: P, T, L and H. Requires pyridoxal 5'-phosphate as cofactor.

It carries out the reaction N(6)-[(R)-lipoyl]-L-lysyl-[glycine-cleavage complex H protein] + glycine + H(+) = N(6)-[(R)-S(8)-aminomethyldihydrolipoyl]-L-lysyl-[glycine-cleavage complex H protein] + CO2. Its function is as follows. The glycine cleavage system catalyzes the degradation of glycine. The P protein binds the alpha-amino group of glycine through its pyridoxal phosphate cofactor; CO(2) is released and the remaining methylamine moiety is then transferred to the lipoamide cofactor of the H protein. The protein is Glycine dehydrogenase (decarboxylating) of Edwardsiella ictaluri (strain 93-146).